Consider the following 333-residue polypeptide: 4-hydroxy-3-methylbut-2-enyl diphosphate reductase (333 aa).

C20 lines the [4Fe-4S] cluster pocket. (2E)-4-hydroxy-3-methylbut-2-enyl diphosphate-binding residues include H49 and H85. The dimethylallyl diphosphate site is built by H49 and H85. H49 and H85 together coordinate isopentenyl diphosphate. C107 contacts [4Fe-4S] cluster. Position 135 (H135) interacts with (2E)-4-hydroxy-3-methylbut-2-enyl diphosphate. Position 135 (H135) interacts with dimethylallyl diphosphate. H135 contacts isopentenyl diphosphate. Catalysis depends on E137, which acts as the Proton donor. T176 serves as a coordination point for (2E)-4-hydroxy-3-methylbut-2-enyl diphosphate. [4Fe-4S] cluster is bound at residue C206. S234, S235, N236, and S279 together coordinate (2E)-4-hydroxy-3-methylbut-2-enyl diphosphate. Dimethylallyl diphosphate contacts are provided by S234, S235, N236, and S279. Isopentenyl diphosphate-binding residues include S234, S235, N236, and S279.

The protein belongs to the IspH family. Requires [4Fe-4S] cluster as cofactor.

The enzyme catalyses isopentenyl diphosphate + 2 oxidized [2Fe-2S]-[ferredoxin] + H2O = (2E)-4-hydroxy-3-methylbut-2-enyl diphosphate + 2 reduced [2Fe-2S]-[ferredoxin] + 2 H(+). It catalyses the reaction dimethylallyl diphosphate + 2 oxidized [2Fe-2S]-[ferredoxin] + H2O = (2E)-4-hydroxy-3-methylbut-2-enyl diphosphate + 2 reduced [2Fe-2S]-[ferredoxin] + 2 H(+). It participates in isoprenoid biosynthesis; dimethylallyl diphosphate biosynthesis; dimethylallyl diphosphate from (2E)-4-hydroxy-3-methylbutenyl diphosphate: step 1/1. Its pathway is isoprenoid biosynthesis; isopentenyl diphosphate biosynthesis via DXP pathway; isopentenyl diphosphate from 1-deoxy-D-xylulose 5-phosphate: step 6/6. In terms of biological role, catalyzes the conversion of 1-hydroxy-2-methyl-2-(E)-butenyl 4-diphosphate (HMBPP) into a mixture of isopentenyl diphosphate (IPP) and dimethylallyl diphosphate (DMAPP). Acts in the terminal step of the DOXP/MEP pathway for isoprenoid precursor biosynthesis. This chain is 4-hydroxy-3-methylbut-2-enyl diphosphate reductase, found in Rhizobium etli (strain CIAT 652).